We begin with the raw amino-acid sequence, 440 residues long: Gap junction alpha-8 protein (440 aa).

The stretch at 2-12 is an intramembrane region; that stretch reads GDWSFLGNILE. Topologically, residues 13–21 are cytoplasmic; that stretch reads EVNEHSTVI. A helical transmembrane segment spans residues 22–42; the sequence is GRVWLTVLFIFRILILGTAAE. Residues 43–71 are Extracellular-facing; sequence FVWGDEQSDFVCNTQQPGCENVCYDEAFP. 3 disulfide bridges follow: Cys54–Cys201, Cys61–Cys195, and Cys65–Cys190. The helical transmembrane segment at 72–92 threads the bilayer; the sequence is ISHIRLWVLQIIFVSTPSLMY. At 93-161 the chain is on the cytoplasmic side; sequence VGHAVHHVRM…GTLLRTYVCH (69 aa). Residues 111–143 form a disordered region; it reads AEELCQQSRSNGGERVPIAPDQASIRKSSSSSK. A helical transmembrane segment spans residues 162–182; sequence IIFKTLFEVGFIVGHYFLYGF. The Extracellular segment spans residues 183 to 210; it reads RILPLYRCSRWPCPNVVDCFVSRPTEKT. Residues 211–231 traverse the membrane as a helical segment; that stretch reads IFILFMLSVAFVSLFLNIMEM. The Cytoplasmic segment spans residues 232–440; the sequence is SHLGMKGIRS…SRARSDDLTI (209 aa). Positions 334-440 are disordered; the sequence is GAQEVEREEQ…SRARSDDLTI (107 aa). Composition is skewed to basic and acidic residues over residues 353-364 and 375-399; these read VGEKKQEAEKVA and DGEK…EKVT. Low complexity predominate over residues 423 to 432; it reads LSRLSKASSR.

Belongs to the connexin family. Alpha-type (group II) subfamily. In terms of assembly, a hemichannel or connexon is composed of a hexamer of connexins. A functional gap junction is formed by the apposition of two hemichannels. Forms heteromeric channels with GJA3. In terms of tissue distribution, detected in eye lens (at protein level).

It localises to the cell membrane. The protein resides in the cell junction. Its subcellular location is the gap junction. Functionally, structural component of eye lens gap junctions. Gap junctions are dodecameric channels that connect the cytoplasm of adjoining cells. They are formed by the docking of two hexameric hemichannels, one from each cell membrane. Small molecules and ions diffuse from one cell to a neighboring cell via the central pore. This Rattus norvegicus (Rat) protein is Gap junction alpha-8 protein (Gja8).